The chain runs to 490 residues: COP9 signalosome complex subunit 2 (490 aa).

Residues 1–30 are compositionally biased toward acidic residues; sequence MSDDDFMQDSDQEYDFEYEDDEEEDTGDVD. A disordered region spans residues 1–32; sequence MSDDDFMQDSDQEYDFEYEDDEEEDTGDVDIE. In terms of domain architecture, PCI spans 250–418; it reads SEENWKEAQS…GVLELESRED (169 aa). The segment at 469 to 490 is disordered; sequence DTMRSMGSGKRGRRVGLTQRAY.

This sequence belongs to the CSN2 family. In terms of assembly, component of the COP9 signalosome (CSN) complex.

The protein localises to the cytoplasm. The protein resides in the nucleus. Component of the COP9 signalosome (CSN) complex that acts as an regulator of the ubiquitin (Ubl) conjugation pathway by mediating the deneddylation of the cullin subunit of SCF-type E3 ubiquitin-protein ligase complexes. The CSN complex is involved in the regulation of the circadian clock through its control of the stability of the SCF(FWD-1) complex. The polypeptide is COP9 signalosome complex subunit 2 (csn-2) (Neurospora crassa (strain ATCC 24698 / 74-OR23-1A / CBS 708.71 / DSM 1257 / FGSC 987)).